Consider the following 301-residue polypeptide: MAPMIPPRLQRFPATASADEIFAAFQEDGCVVIEGFISPEQVARFSQEVDPAMEKIPVEVTNNGNSNDRTKRFSKCVIASPTFRNEIIESDLMHELCDRVFSKPGEGMGYHFNDNMVIEVQPGAPAQRLHRDQELYPWWNSMGPAGPECVINFFCAVTPFTEENGATRLVPGSHLWPEFTQINERDCPQFGKIETVPAIMQPGDCYLMSGKVIHGAGHNATTTDRRRALALAIIRRELRPMQAFSLSVPMKLAREMSERSQTMFGFRSSVQHCDVDMVHFWGNDGKDIAHHLGLEAPSVHV.

3 residues coordinate Fe cation: H130, D132, and H214.

Belongs to the PhyH family. As to quaternary structure, homodimer. Fe cation serves as cofactor.

The enzyme catalyses preaustinoid A1 + 2-oxoglutarate + O2 = berkeleyone B + succinate + CO2 + H2O. The catalysed reaction is berkeleyone B + 2-oxoglutarate + O2 = berkeleydione + succinate + CO2 + H2O. It catalyses the reaction preaustinoid A + 2 2-oxoglutarate + 2 O2 = berkeleytrione + 2 succinate + 2 CO2 + H2O. Its pathway is secondary metabolite biosynthesis; terpenoid biosynthesis. In terms of biological role, multifunctional dioxygenase; part of the gene cluster that mediates the biosynthesis of paraherquonin, a meroterpenoid with a unique, highly congested hexacyclic molecular architecture. The first step of the pathway is the synthesis of 3,5-dimethylorsellinic acid (DMOA) by the polyketide synthase prhL. Synthesis of DMOA is followed by farnesylation by the prenyltransferase prhE, methylesterification by the methyl-transferase prhM, epoxidation of the prenyl chain by the flavin-dependent monooxygenase prhF, and cyclization of the farnesyl moiety by the terpene cyclase prhH, to yield the tetracyclic intermediate, protoaustinoid A. The short chain dehydrogenase prhI then oxidizes the C-3 alcohol group of the terpene cyclase product to transform protoaustinoid A into protoaustinoid B. The FAD-binding monooxygenase prhJ catalyzes the oxidation of protoaustinoid B into preaustinoid A which is further oxidized into preaustinoid A1 by FAD-binding monooxygenase phrK. Finally, prhA leads to berkeleydione via the berkeleyone B intermediate. PrhA is a multifunctional dioxygenase that first desaturates at C5-C6 to form berkeleyone B, followed by rearrangement of the A/B-ring to form the cycloheptadiene moiety in berkeleydione. Berkeleydione serves as the key intermediate for the biosynthesis of paraherquonin as well as many other meroterpenoids. The cytochrome P450 monooxygenases prhB, prhD, and prhN, as well as the isomerase prhC, are probably involved in the late stage of paraherquonin biosynthesis, after the production of berkeleydione. Especially prhC might be a multifunctional enzyme that catalyzes the D-ring expansion via intramolecular methoxy rearrangement, as well as the hydrolysis of the expanded D-ring. The chain is Multifunctional dioxygenase prhA from Penicillium brasilianum.